A 121-amino-acid polypeptide reads, in one-letter code: Large ribosomal subunit protein bL12 (121 aa).

Belongs to the bacterial ribosomal protein bL12 family. In terms of assembly, homodimer. Part of the ribosomal stalk of the 50S ribosomal subunit. Forms a multimeric L10(L12)X complex, where L10 forms an elongated spine to which 2 to 4 L12 dimers bind in a sequential fashion. Binds GTP-bound translation factors.

Its function is as follows. Forms part of the ribosomal stalk which helps the ribosome interact with GTP-bound translation factors. Is thus essential for accurate translation. The chain is Large ribosomal subunit protein bL12 from Streptococcus agalactiae serotype V (strain ATCC BAA-611 / 2603 V/R).